Reading from the N-terminus, the 716-residue chain is MARMSFVLAAYQMVLSLLMTSLTGSSLQSSECPQLCVCEIRPWFTPQSTYREATTVDCNDLRLTRIPSNLSSDTQVLLLQSNNIAKTVDELQQLFNLTELDFSQNNFTNIKEVGLANLTQLTTLHLEENQITEMNDYCLQDLSNLQELYINHNQISTISANAFSGLKNLLRLHLNSNKLKVIDSRWFDSTPNLEILMIGENPVIGILDMNFKPLSNLRSLVLAGMYLTDIPGNALVGLDSLESLSFYDNKLVKVPQLALQKVPNLKFLDLNKNPIHKIQEGDFKNMLRLKELGINNMGELVSVDRYALDNLPELTKLEATNNPKLSYIHRLAFRSVPALESLMLNNNALNAVYQKTVESLPNLREISIHSNPLRCDCVIHWINSNKTNIRFMEPLSMFCAMPPEYRGQQVKEVLIQDSSEQCLPMISHDTFPNHLNMDIGTTVFLDCRAMAEPEPEIYWVTPLGNKITVETLSEKYKLSSEGTLEISKIQIEDSGRYTCVAQNVEGADTRVVMIKVNGTLLDGAQVLKIYVKQTESHSILVSWKVNSNVMTSNLKWSSATMKIDNPHITYTARVPVDVHEYNLTHLQPSTDYEVCLTVSNIHQQTQKSCVNVTTKNAAFALDISDQETSTALAAVMGSMFAVISLASIAVYIAKRFKRKNYHHSLKKYMQKTSSIPLNELYPPLINLWEGDSEKDKDGTADTKPTQVDTSRSYYMW.

An N-terminal signal peptide occupies residues 1–25; the sequence is MARMSFVLAAYQMVLSLLMTSLTGS. In terms of domain architecture, LRRNT spans 26-72; that stretch reads SLQSSECPQLCVCEIRPWFTPQSTYREATTVDCNDLRLTRIPSNLSS. Residues 26–631 are Extracellular-facing; it reads SLQSSECPQL…DISDQETSTA (606 aa). N-linked (GlcNAc...) asparagine glycosylation occurs at N69. LRR repeat units lie at residues 73 to 95, 96 to 117, 120 to 141, 144 to 165, 168 to 189, 192 to 213, 216 to 237, 240 to 261, and 264 to 285; these read DTQVLLLQSNNIAKTVDELQQLF, NLTELDFSQNNFTNIKEVGLAN, QLTTLHLEENQITEMNDYCLQD, NLQELYINHNQISTISANAFSG, NLLRLHLNSNKLKVIDSRWFDS, NLEILMIGENPVIGILDMNFKP, NLRSLVLAGMYLTDIPGNALVG, SLESLSFYDNKLVKVPQLALQK, and NLKFLDLNKNPIHKIQEGDFKN. N-linked (GlcNAc...) asparagine glycosylation is found at N96, N106, and N117. Residues 371 to 424 form the LRRCT domain; sequence NPLRCDCVIHWINSNKTNIRFMEPLSMFCAMPPEYRGQQVKEVLIQDSSEQCLP. Residue N385 is glycosylated (N-linked (GlcNAc...) asparagine). The region spanning 424–515 is the Ig-like C2-type domain; the sequence is PMISHDTFPN…GADTRVVMIK (92 aa). C447 and C499 form a disulfide bridge. N517, N582, and N611 each carry an N-linked (GlcNAc...) asparagine glycan. The Fibronectin type-III domain occupies 525–617; that stretch reads QVLKIYVKQT…SCVNVTTKNA (93 aa). The chain crosses the membrane as a helical span at residues 632–652; it reads LAAVMGSMFAVISLASIAVYI. Residues 653–716 lie on the Cytoplasmic side of the membrane; it reads AKRFKRKNYH…VDTSRSYYMW (64 aa). A compositionally biased stretch (basic and acidic residues) spans 691 to 700; that stretch reads DSEKDKDGTA. The tract at residues 691–716 is disordered; it reads DSEKDKDGTADTKPTQVDTSRSYYMW. Residues 702-716 show a composition bias toward polar residues; it reads TKPTQVDTSRSYYMW.

Its subcellular location is the membrane. The sequence is that of Leucine-rich repeat neuronal protein 1 (LRRN1) from Bos taurus (Bovine).